A 325-amino-acid polypeptide reads, in one-letter code: Elongation factor P--(R)-beta-lysine ligase (325 aa).

Ser76–Glu78 serves as a coordination point for substrate. Residues Arg100 to Glu102 and Asn109 each bind ATP. Residue Tyr118 participates in substrate binding. Glu244–Leu245 is an ATP binding site. Residue Glu251 coordinates substrate. Gly300 is an ATP binding site.

This sequence belongs to the class-II aminoacyl-tRNA synthetase family. EpmA subfamily. In terms of assembly, homodimer.

It catalyses the reaction D-beta-lysine + L-lysyl-[protein] + ATP = N(6)-((3R)-3,6-diaminohexanoyl)-L-lysyl-[protein] + AMP + diphosphate + H(+). Functionally, with EpmB is involved in the beta-lysylation step of the post-translational modification of translation elongation factor P (EF-P) on 'Lys-34'. Catalyzes the ATP-dependent activation of (R)-beta-lysine produced by EpmB, forming a lysyl-adenylate, from which the beta-lysyl moiety is then transferred to the epsilon-amino group of EF-P 'Lys-34'. This is Elongation factor P--(R)-beta-lysine ligase from Salmonella dublin (strain CT_02021853).